The chain runs to 414 residues: Protein DNA-DAMAGE INDUCIBLE 1 (414 aa).

The Ubiquitin-like domain maps to 1-76 (MRITVMTAGE…LMMMVSNASS (76 aa)). In terms of domain architecture, Peptidase A2 spans 213–292 (LKAFVDSGAQ…NMEFLFGLDM (80 aa)). Aspartate 218 is a catalytic residue. The segment at 332–374 (ERVPNDASSSGATVPSGFTEKKNNTVANPTSQQPKRQNTSEGP) is disordered. Residues 355 to 372 (NTVANPTSQQPKRQNTSE) show a composition bias toward polar residues. Residues 374–414 (PEFEAKIAKLVELGFSRDSVIQALKLFEGNEEQAAGFLFGG) form the UBA domain.

The protein belongs to the DDI1 family. As to quaternary structure, homodimer.

It is found in the cytoplasm. The protein localises to the cytosol. In terms of biological role, receptor of ubiquitinated protein targeted to ubiquitin/proteasome-mediated proteolysis (UPP). Relatively weak affinity for both 'Lys-48'- and 'Lys-63'-linked ubiquitin chains with a slight preference for 'Lys-48-'linked chains of three or more ubiquitin units. This Arabidopsis thaliana (Mouse-ear cress) protein is Protein DNA-DAMAGE INDUCIBLE 1.